The chain runs to 909 residues: Yellow mounds protein A (909 aa).

One can recognise an MIF4G domain in the interval 7–283 (LNVVSRILNK…KNLFELKNNK (277 aa)). 5 disordered regions span residues 178–232 (SMGG…NNNI), 415–439 (MESSSNNNNSNSQLQFSLSSSSGIK), 460–537 (INLP…SSAP), 627–689 (VPPV…SEAR), and 704–774 (SLSG…AKKH). Residues 204-215 (DDDDHDEEDNEN) are compositionally biased toward acidic residues. 2 stretches are compositionally biased toward low complexity: residues 216–231 (NYENTTSTTNNINNNN) and 417–436 (SSSNNNNSNSQLQFSLSSSS). Residues 473–490 (RSNSPSLSSVVKQPQSQQ) are compositionally biased toward polar residues. Positions 491–525 (NNNNNNNNNNNNTTITTTTSSNNNINNNNNNNNNN) are enriched in low complexity. A compositionally biased stretch (polar residues) spans 721 to 738 (STPTLKSTPAIVQNGGSI). Over residues 739–756 (TSTSSSSSSSSSSSSSTT) the composition is skewed to low complexity. Residues 845 to 877 (TMLFDLEEMAQEQQNLEKQNDQQQNLLTQNNQI) are a coiled coil.

Plays as essential role in regulating terminal differentiation. The chain is Yellow mounds protein A (yelA) from Dictyostelium discoideum (Social amoeba).